We begin with the raw amino-acid sequence, 814 residues long: Protein fam-161 (814 aa).

Residues 71-87 (ITQHRSSYKVTKSSSCH) are compositionally biased toward polar residues. Disordered regions lie at residues 71 to 130 (ITQH…SWSQ), 150 to 255 (RHQV…ATSA), 569 to 610 (SRSK…THAT), and 714 to 814 (MKSA…SSEA). Residues 99–111 (MPRHLDLKPRSSE) are compositionally biased toward basic and acidic residues. Over residues 174-193 (STAPSQVSVTSSVQSVAALS) the composition is skewed to low complexity. Composition is skewed to polar residues over residues 194-207 (GQNP…TPSH) and 216-235 (RTHQ…TLQN). The span at 236 to 249 (PRHRTSSASRHHST) shows a compositional bias: basic residues. 2 stretches are compositionally biased toward polar residues: residues 570 to 583 (RSKS…NCQE) and 594 to 610 (ENLP…THAT). The stretch at 606–689 (STHATQLREE…LAEMKQRVLN (84 aa)) forms a coiled coil. The segment covering 714-727 (MKSAKGRGIERVQS) has biased composition (basic and acidic residues). The segment covering 728-745 (QEKQQSIGRRSSEVSGSG) has biased composition (polar residues). Over residues 751–765 (KGYEESFESEDKSEK) the composition is skewed to basic and acidic residues. 2 stretches are compositionally biased toward low complexity: residues 766–779 (SGSS…SGSE) and 795–814 (SKST…SSEA).

The protein belongs to the FAM161 family. As to expression, expressed in amphid and phasmid ciliated neurons.

It localises to the cell projection. The protein localises to the cilium. It is found in the cytoplasm. The protein resides in the cytoskeleton. Its subcellular location is the cilium axoneme. This chain is Protein fam-161, found in Caenorhabditis elegans.